An 89-amino-acid polypeptide reads, in one-letter code: Small ribosomal subunit protein uS15 (89 aa).

A compositionally biased stretch (basic and acidic residues) spans 1 to 11 (MSITAERKAEV). Residues 1–24 (MSITAERKAEVIKTSATKAGDTGS) form a disordered region.

Belongs to the universal ribosomal protein uS15 family. Part of the 30S ribosomal subunit. Forms a bridge to the 50S subunit in the 70S ribosome, contacting the 23S rRNA.

Functionally, one of the primary rRNA binding proteins, it binds directly to 16S rRNA where it helps nucleate assembly of the platform of the 30S subunit by binding and bridging several RNA helices of the 16S rRNA. Its function is as follows. Forms an intersubunit bridge (bridge B4) with the 23S rRNA of the 50S subunit in the ribosome. The polypeptide is Small ribosomal subunit protein uS15 (Rhodopseudomonas palustris (strain TIE-1)).